The primary structure comprises 377 residues: Anhydro-N-acetylmuramic acid kinase (377 aa).

18–25 (GTSADGID) contacts ATP.

This sequence belongs to the anhydro-N-acetylmuramic acid kinase family.

The enzyme catalyses 1,6-anhydro-N-acetyl-beta-muramate + ATP + H2O = N-acetyl-D-muramate 6-phosphate + ADP + H(+). Its pathway is amino-sugar metabolism; 1,6-anhydro-N-acetylmuramate degradation. It functions in the pathway cell wall biogenesis; peptidoglycan recycling. Functionally, catalyzes the specific phosphorylation of 1,6-anhydro-N-acetylmuramic acid (anhMurNAc) with the simultaneous cleavage of the 1,6-anhydro ring, generating MurNAc-6-P. Is required for the utilization of anhMurNAc either imported from the medium or derived from its own cell wall murein, and thus plays a role in cell wall recycling. In Xanthomonas campestris pv. campestris (strain 8004), this protein is Anhydro-N-acetylmuramic acid kinase.